Here is a 672-residue protein sequence, read N- to C-terminus: Protein seu-1 (672 aa).

Disordered regions lie at residues 1 to 463 (MSSI…AGTE) and 576 to 672 (LAPP…LKHL). Over residues 8–20 (NDNRRPTFRDHRT) the composition is skewed to basic and acidic residues. Residues 25–34 (GRGGSGGGGR) are compositionally biased toward gly residues. The span at 62–85 (RSQDHRQRSPEVRRHRSPEKESKD) shows a compositional bias: basic and acidic residues. Positions 87–105 (VVTSTGSSRGATSASVTSS) are enriched in low complexity. 4 stretches are compositionally biased toward basic and acidic residues: residues 107-138 (RRHESGERHRETHRREDKEKKPEKSTDRDADR), 189-226 (VSRHSENRRKSSSDVSRRHGDKEKRDRKREDVKKKSNG), 234-268 (RRREEDHKRKSESSRKEKKDEDVKEKVVDENKVED), and 289-306 (EQAKEHGSDEPERPESHQ). Residues 307 to 317 (SAHSAAVSNAS) show a composition bias toward low complexity. The span at 322 to 343 (SEEELDYEEDDIDVDLDGDIDV) shows a compositional bias: acidic residues. Composition is skewed to basic and acidic residues over residues 366–375 (NDVKDETMEE), 382–396 (PEKKKPRTSENDDKD), 410–424 (RREDDKDRRQSSDHH), 436–447 (RATDHKESRRSE), 607–626 (SFGDRGNRSDEHHGGSRHMD), and 636–659 (DHRVRDDGRRVSSFEDRKRPERGF).

As to expression, highly expressed in intestinal cells, lateral hypodermal (seam) cells, Pn.p ventral hypodermal cells, and spermatheca. Expressed at low levels in the ventral nerve cord.

Its subcellular location is the nucleus. Functionally, together with unc-5, involved in touch neuron axon guidance. During gonad morphogenesis, plays a role in the unc-5-/unc-6-mediated migration of distal tip cells along the body. This is Protein seu-1 from Caenorhabditis elegans.